Consider the following 182-residue polypeptide: Isopentenyl-diphosphate Delta-isomerase (182 aa).

The Mn(2+) site is built by H25 and H32. Residues 30-164 (LLHLAFSSWL…PWAFSPWMVM (135 aa)) enclose the Nudix hydrolase domain. Residue C67 is part of the active site. Residue H69 participates in Mn(2+) binding. E87 contacts Mg(2+). The Mn(2+) site is built by E114 and E116. Residue E116 is part of the active site.

This sequence belongs to the IPP isomerase type 1 family. Homodimer. Requires Mg(2+) as cofactor. It depends on Mn(2+) as a cofactor.

The protein resides in the cytoplasm. It catalyses the reaction isopentenyl diphosphate = dimethylallyl diphosphate. Its pathway is isoprenoid biosynthesis; dimethylallyl diphosphate biosynthesis; dimethylallyl diphosphate from isopentenyl diphosphate: step 1/1. Catalyzes the 1,3-allylic rearrangement of the homoallylic substrate isopentenyl (IPP) to its highly electrophilic allylic isomer, dimethylallyl diphosphate (DMAPP). This Shigella boydii serotype 18 (strain CDC 3083-94 / BS512) protein is Isopentenyl-diphosphate Delta-isomerase.